The primary structure comprises 638 residues: MSQKGKNKKWRSAGLYALLAIVLISLATTFLGNRPPERLEISYSDLISRVERGEVSKVLVETAPDGRQVAIAEAEINNRATQVQVNLPPLTPEFENTLVANGVELAVRPVQEEGLLGRILSTFFLPVLLLLGLFFLLRRAQNGPGSQALNFGKSRARVQMEPKTQITFNDVAGIDQAKLELAEVVDFLKNSERFTALGAKIPRGVLLVGPPGTGKTLLARAVAGEAGVPFFSISGSEFVEMFVGVGASRVRDLFEQAKQNAPCIVFIDEIDAVGRQRGAGLGGGNDEREQTLNQLLTEMDGFEGNSGIIVIAATNRPDVLDAALLRPGRFDRQVTVDRPDFQGRLEILKVHARGKTLSADVDLEKLARRTPGFTGADLANLLNEAAILAARRNLTEISMDEINDAVDRVLAGPEKKDRLMSERRKELVAYHEAGHALVGSLLPNYDPIQKVTIIPRGQAGGLTWFMPSDDDMGLTTRAHLKNMMTVALGGRVAEEVVYGESEITTGAASDLQQVARIARNMVTRFGMSDRLGNVALGRQYANIFLGREIAAERDFSEETAALIDEEVRRLVNEAYQRATYLIRENRALLDRIARRLVEAETIDGEELQAIIDNSEVVMLPPEEEPEPLTLPMAVNAGA.

Residues 1 to 11 (MSQKGKNKKWR) are Cytoplasmic-facing. Residues 12–32 (SAGLYALLAIVLISLATTFLG) traverse the membrane as a helical segment. The Lumenal segment spans residues 33–114 (NRPPERLEIS…LAVRPVQEEG (82 aa)). The chain crosses the membrane as a helical span at residues 115-135 (LLGRILSTFFLPVLLLLGLFF). Residues 136 to 638 (LLRRAQNGPG…TLPMAVNAGA (503 aa)) lie on the Cytoplasmic side of the membrane. 209-216 (GPPGTGKT) is an ATP binding site. Residue histidine 431 participates in Zn(2+) binding. Glutamate 432 is a catalytic residue. Residues histidine 435 and aspartate 510 each contribute to the Zn(2+) site.

The protein in the central section; belongs to the AAA ATPase family. It in the C-terminal section; belongs to the peptidase M41 family. Homohexamer. The cofactor is Zn(2+).

The protein resides in the cellular thylakoid membrane. Acts as a processive, ATP-dependent zinc metallopeptidase for both cytoplasmic and membrane proteins. Plays a role in the quality control of integral membrane proteins. The chain is ATP-dependent zinc metalloprotease FtsH from Synechococcus sp. (strain JA-2-3B'a(2-13)) (Cyanobacteria bacterium Yellowstone B-Prime).